A 103-amino-acid polypeptide reads, in one-letter code: Integration host factor subunit alpha (103 aa).

Residues 51-73 (FGNFQLRDKPQRPGRNPKTGEEI) are disordered.

It belongs to the bacterial histone-like protein family. As to quaternary structure, heterodimer of an alpha and a beta chain.

Functionally, this protein is one of the two subunits of integration host factor, a specific DNA-binding protein that functions in genetic recombination as well as in transcriptional and translational control. This chain is Integration host factor subunit alpha, found in Azoarcus sp. (strain BH72).